Here is a 315-residue protein sequence, read N- to C-terminus: Ribosomal RNA small subunit methyltransferase H (315 aa).

S-adenosyl-L-methionine-binding positions include 35-37 (AGH), aspartate 55, phenylalanine 84, aspartate 105, and glutamine 112.

It belongs to the methyltransferase superfamily. RsmH family.

The protein localises to the cytoplasm. It catalyses the reaction cytidine(1402) in 16S rRNA + S-adenosyl-L-methionine = N(4)-methylcytidine(1402) in 16S rRNA + S-adenosyl-L-homocysteine + H(+). Functionally, specifically methylates the N4 position of cytidine in position 1402 (C1402) of 16S rRNA. The chain is Ribosomal RNA small subunit methyltransferase H from Streptococcus agalactiae serotype Ia (strain ATCC 27591 / A909 / CDC SS700).